A 211-amino-acid polypeptide reads, in one-letter code: Protein-L-isoaspartate O-methyltransferase (211 aa).

S60 is an active-site residue.

Belongs to the methyltransferase superfamily. L-isoaspartyl/D-aspartyl protein methyltransferase family.

It localises to the cytoplasm. The catalysed reaction is [protein]-L-isoaspartate + S-adenosyl-L-methionine = [protein]-L-isoaspartate alpha-methyl ester + S-adenosyl-L-homocysteine. Functionally, catalyzes the methyl esterification of L-isoaspartyl residues in peptides and proteins that result from spontaneous decomposition of normal L-aspartyl and L-asparaginyl residues. It plays a role in the repair and/or degradation of damaged proteins. This Pseudomonas paraeruginosa (strain DSM 24068 / PA7) (Pseudomonas aeruginosa (strain PA7)) protein is Protein-L-isoaspartate O-methyltransferase.